The primary structure comprises 331 residues: Tetraacyldisaccharide 4'-kinase (331 aa).

An ATP-binding site is contributed by 58–65 (TVGGSGKT).

It belongs to the LpxK family.

The enzyme catalyses a lipid A disaccharide + ATP = a lipid IVA + ADP + H(+). The protein operates within glycolipid biosynthesis; lipid IV(A) biosynthesis; lipid IV(A) from (3R)-3-hydroxytetradecanoyl-[acyl-carrier-protein] and UDP-N-acetyl-alpha-D-glucosamine: step 6/6. Its function is as follows. Transfers the gamma-phosphate of ATP to the 4'-position of a tetraacyldisaccharide 1-phosphate intermediate (termed DS-1-P) to form tetraacyldisaccharide 1,4'-bis-phosphate (lipid IVA). This is Tetraacyldisaccharide 4'-kinase from Shewanella denitrificans (strain OS217 / ATCC BAA-1090 / DSM 15013).